We begin with the raw amino-acid sequence, 172 residues long: Shikimate kinase (172 aa).

12 to 17 lines the ATP pocket; that stretch reads GSGKTS. Mg(2+) is bound at residue threonine 16. The substrate site is built by aspartate 34, arginine 58, and glycine 81. Arginine 122 contacts ATP. Arginine 139 contributes to the substrate binding site.

Belongs to the shikimate kinase family. In terms of assembly, monomer. The cofactor is Mg(2+).

The protein localises to the cytoplasm. The catalysed reaction is shikimate + ATP = 3-phosphoshikimate + ADP + H(+). Its pathway is metabolic intermediate biosynthesis; chorismate biosynthesis; chorismate from D-erythrose 4-phosphate and phosphoenolpyruvate: step 5/7. Catalyzes the specific phosphorylation of the 3-hydroxyl group of shikimic acid using ATP as a cosubstrate. In Dictyoglomus turgidum (strain DSM 6724 / Z-1310), this protein is Shikimate kinase.